Reading from the N-terminus, the 179-residue chain is Adenine phosphoribosyltransferase (179 aa).

The protein belongs to the purine/pyrimidine phosphoribosyltransferase family. Homodimer.

Its subcellular location is the cytoplasm. It catalyses the reaction AMP + diphosphate = 5-phospho-alpha-D-ribose 1-diphosphate + adenine. It functions in the pathway purine metabolism; AMP biosynthesis via salvage pathway; AMP from adenine: step 1/1. In terms of biological role, catalyzes a salvage reaction resulting in the formation of AMP, that is energically less costly than de novo synthesis. The protein is Adenine phosphoribosyltransferase of Haemophilus ducreyi (strain 35000HP / ATCC 700724).